The chain runs to 699 residues: Ciliated left-right organizer metallopeptidase (699 aa).

The first 18 residues, 1–18, serve as a signal peptide directing secretion; sequence MKMWRLLLLGVATGRCLH. Topologically, residues 19-663 are extracellular; sequence EETQKSVRLL…SLDHNPSMTE (645 aa). His238 contacts Zn(2+). Glu239 is an active-site residue. Residues His242 and His318 each contribute to the Zn(2+) site. The chain crosses the membrane as a helical span at residues 664 to 684; sequence LLLSTGFCLLVLILVGALGTL. At 685–699 the chain is on the cytoplasmic side; the sequence is AYQKRAMLQVAPSTT.

Belongs to the peptidase M8 family. Zn(2+) serves as cofactor. Specifically expressed in ciliated left-right organizer.

It localises to the membrane. Putative metalloproteinase that plays a role in left-right patterning process. This is Ciliated left-right organizer metallopeptidase from Mus musculus (Mouse).